The sequence spans 441 residues: Capsid protein (441 aa).

The segment at 26–63 is disordered; it reads DSKKKQPIYQNSSESEESETENKNFIYDFSSEEDFEEP. The Nuclear localization signal signature appears at 77–79; sequence KRK. A CCHC-type zinc finger spans residues 381-398; sequence CQCWLCHEEGHYANECPK.

The protein belongs to the caulimoviridae capsid protein family. Interacts (via nuclear localization signal) with host importin alpha.

It localises to the virion. The protein resides in the host nucleus. In terms of biological role, self assembles to form an icosahedral capsid, about 50 nm in diameter, nm, composed of 420 subunits of the viral capsid protein. The capsid encapsulates the genomic dsDNA. Following virus entry into host cell, provides nuclear import of the viral genome. Virus particles do not enter the nucleus, but dock at the nuclear membrane through the interaction with host importins. The chain is Capsid protein from Soybean chlorotic mottle virus.